The sequence spans 119 residues: Virulence protein VsdF (119 aa).

Functionally, expressed but non-essential protein, involved in the virulence of Salmonellas. The sequence is that of Virulence protein VsdF (vsdF) from Salmonella dublin.